A 624-amino-acid polypeptide reads, in one-letter code: uncharacterized protein (624 aa).

The signal sequence occupies residues 1-29 (MRFHRQGTAATVGVLLIVLLGFCWKLSES). N-linked (GlcNAc...) asparagine glycosylation is found at asparagine 68, asparagine 150, asparagine 219, asparagine 366, asparagine 441, asparagine 447, asparagine 464, and asparagine 528. The segment at 141 to 174 (LERRHGRFGNGTHGDHPKGPPPPPPPDEKDRGSQ) is disordered.

Its subcellular location is the secreted. This is an uncharacterized protein from Saccharomyces cerevisiae (strain ATCC 204508 / S288c) (Baker's yeast).